Here is a 404-residue protein sequence, read N- to C-terminus: MVYQPAAGARDLLPLDVAQKRWIEDKLQQVFHRWGYHRIITSTLERMDTLMAGEAIQRQMVIQLQNSEDEELGLRPELTASIARAVVTRMTNLRHPQRLYYNANVFRRIWENRHNRQQEFYQAGVELLGVGGLLANAEVLLLAGNCLTALGLQDWHLILGEAGITRSLLDAFPINLRAKVRSAIAHLDRITIDTLPLTDELRERARIMLDLRGNSTDVLQKVSSLNLDAEQQEAVNNLQSLVELLESGGKFPIILDLSLIQTIDYYTGIVFEIVNNTDSQARVLGRGGRYDQLLGLYHPQGENIPGIGFVLNIEDLYQVLLTTQQLPQETPASDWLVVPENPKAHSAAFAHAQKLRESPDLVRVELDLGGTDIPAIQQYARDRRIAQIAWIKADGSLIIEKVSQ.

It belongs to the class-II aminoacyl-tRNA synthetase family. HisZ subfamily. Heteromultimer composed of HisG and HisZ subunits.

The protein localises to the cytoplasm. It functions in the pathway amino-acid biosynthesis; L-histidine biosynthesis; L-histidine from 5-phospho-alpha-D-ribose 1-diphosphate: step 1/9. Its function is as follows. Required for the first step of histidine biosynthesis. May allow the feedback regulation of ATP phosphoribosyltransferase activity by histidine. The protein is ATP phosphoribosyltransferase regulatory subunit of Trichormus variabilis (strain ATCC 29413 / PCC 7937) (Anabaena variabilis).